A 445-amino-acid chain; its full sequence is 26S proteasome regulatory subunit RPN5 (445 aa).

S2 carries the N-acetylserine modification. Residues 233–407 (EYLEVAQYLQ…KIVNFEKPKN (175 aa)) enclose the PCI domain.

The protein belongs to the proteasome subunit p55 family. In terms of processing, N-acetylated by NAT1.

Functionally, acts as a regulatory subunit of the 26S proteasome which is involved in the ATP-dependent degradation of ubiquitinated proteins. This chain is 26S proteasome regulatory subunit RPN5 (RPN5), found in Saccharomyces cerevisiae (strain ATCC 204508 / S288c) (Baker's yeast).